The primary structure comprises 479 residues: Replication factor C large subunit (479 aa).

Position 50-57 (50-57) interacts with ATP; sequence GPPGSGKT. Basic and acidic residues predominate over residues 420 to 468; sequence EKIRKERKEEEKVEVREEKPEEKVEEKREERETKKEKEKKEEKKAEKKG. The disordered stretch occupies residues 420 to 479; the sequence is EKIRKERKEEEKVEVREEKPEEKVEEKREERETKKEKEKKEEKKAEKKGKQVTLFDFIKK.

The protein belongs to the activator 1 small subunits family. RfcL subfamily. As to quaternary structure, heterohexamer composed of four small subunits (RfcS) and two large subunits (RfcL).

Its function is as follows. Part of the RFC clamp loader complex which loads the PCNA sliding clamp onto DNA. The complex possesses DNA-independent ATPase activity. The polypeptide is Replication factor C large subunit (rfcL) (Pyrococcus abyssi (strain GE5 / Orsay)).